The chain runs to 165 residues: MKELLAPVQAWWRSVTPREQKMVMGMGALTVLAIAYWGIWQPLSERTAQAQARLQTEKQLLSWVSENANDIVTLRAQGGSDAPSDQPLNQVITNSTRQFNIELIRVQPRGEMMQVWIQPLPFSQLVSWIAYLQERQGVSVDAIDIDRGKVNGVVEVKRLQLKRGG.

Residues 1–22 (MKELLAPVQAWWRSVTPREQKM) lie on the Cytoplasmic side of the membrane. The helical transmembrane segment at 23–43 (VMGMGALTVLAIAYWGIWQPL) threads the bilayer. The Periplasmic portion of the chain corresponds to 44–165 (SERTAQAQAR…VKRLQLKRGG (122 aa)).

It belongs to the GSP M family. Type II secretion system is composed of four main components: the outer membrane complex, the inner membrane complex, the cytoplasmic secretion ATPase and the periplasm-spanning pseudopilus. Forms homodimers. Interacts with EpsL/GspL. Interacts with EpsE/GspE. Interacts with EpsF/GspF.

It localises to the cell inner membrane. Inner membrane component of the type II secretion system required for the energy-dependent secretion of extracellular factors such as proteases and toxins from the periplasm. Plays a role in the complex assembly and recruits EpsL resulting in a stable complex in the inner membrane. Provides thus a link between the energy-providing EpsE protein in the cytoplasm and the rest of the T2SS machinery. The polypeptide is Type II secretion system protein M (epsM) (Vibrio cholerae serotype O1 (strain ATCC 39315 / El Tor Inaba N16961)).